A 286-amino-acid polypeptide reads, in one-letter code: MPSLIDIRRRIRSVKNTQQITKAMKMVSAAKLRRAQDRTIAARPYGTLLRKVLGNVAAAVANDESAAENPLLARREERRILLVVITGDKGLAGAFNTNLIKAASRFVAEHSGEQITFELIGRKGRDYFRKREVAVSGEAIGLAAKVKYEDTAAIARRAMELFRNQEIDAVYLVYNEFKSVVSQKLTLSRVLPAELPEQANPVDYIFEEPPADMLNILLPKYVEMEFYRALLESAASEHAARMTAMDSATSNAAEMIDKLTLYMNRVRQASITKEIIEVVSGAAAAE.

The protein belongs to the ATPase gamma chain family. F-type ATPases have 2 components, CF(1) - the catalytic core - and CF(0) - the membrane proton channel. CF(1) has five subunits: alpha(3), beta(3), gamma(1), delta(1), epsilon(1). CF(0) has three main subunits: a, b and c.

The protein resides in the cell inner membrane. Functionally, produces ATP from ADP in the presence of a proton gradient across the membrane. The gamma chain is believed to be important in regulating ATPase activity and the flow of protons through the CF(0) complex. This is ATP synthase gamma chain from Solibacter usitatus (strain Ellin6076).